A 262-amino-acid chain; its full sequence is Hydroxyethylthiazole kinase (262 aa).

Methionine 50 is a substrate binding site. Residues arginine 125 and threonine 171 each contribute to the ATP site. A substrate-binding site is contributed by glycine 198.

Belongs to the Thz kinase family. Mg(2+) serves as cofactor.

The enzyme catalyses 5-(2-hydroxyethyl)-4-methylthiazole + ATP = 4-methyl-5-(2-phosphooxyethyl)-thiazole + ADP + H(+). It functions in the pathway cofactor biosynthesis; thiamine diphosphate biosynthesis; 4-methyl-5-(2-phosphoethyl)-thiazole from 5-(2-hydroxyethyl)-4-methylthiazole: step 1/1. Its function is as follows. Catalyzes the phosphorylation of the hydroxyl group of 4-methyl-5-beta-hydroxyethylthiazole (THZ). The sequence is that of Hydroxyethylthiazole kinase from Shigella flexneri serotype 5b (strain 8401).